A 212-amino-acid polypeptide reads, in one-letter code: ATP-dependent dethiobiotin synthetase BioD (212 aa).

13–18 is an ATP binding site; that stretch reads GIGKTV. Threonine 17 serves as a coordination point for Mg(2+). Lysine 33 is an active-site residue. Serine 37 is a substrate binding site. A Mg(2+)-binding site is contributed by glutamate 100. Residues 100–103, 160–161, and 184–186 contribute to the ATP site; these read EGAG, IS, and PLL.

This sequence belongs to the dethiobiotin synthetase family. As to quaternary structure, homodimer. The cofactor is Mg(2+).

It localises to the cytoplasm. The enzyme catalyses (7R,8S)-7,8-diammoniononanoate + CO2 + ATP = (4R,5S)-dethiobiotin + ADP + phosphate + 3 H(+). It functions in the pathway cofactor biosynthesis; biotin biosynthesis; biotin from 7,8-diaminononanoate: step 1/2. In terms of biological role, catalyzes a mechanistically unusual reaction, the ATP-dependent insertion of CO2 between the N7 and N8 nitrogen atoms of 7,8-diaminopelargonic acid (DAPA, also called 7,8-diammoniononanoate) to form a ureido ring. This Brucella abortus (strain S19) protein is ATP-dependent dethiobiotin synthetase BioD.